Consider the following 150-residue polypeptide: Oleosin Ara h 10.0102 (150 aa).

2 helical membrane-spanning segments follow: residues V39–A59 and L73–A93.

It belongs to the oleosin family. In terms of tissue distribution, expressed in seeds (at protein level).

The protein resides in the lipid droplet. It is found in the membrane. In terms of biological role, may have a structural role to stabilize the lipid body during desiccation of the seed by preventing coalescence of the oil. Probably interacts with both lipid and phospholipid moieties of lipid bodies. May also provide recognition signals for specific lipase anchorage in lipolysis during seedling growth. The polypeptide is Oleosin Ara h 10.0102 (Arachis hypogaea (Peanut)).